Consider the following 218-residue polypeptide: MNQADNSTVIIDTGCANLSSVRYAFERICSDVIVSDNHDLIKAATRVVLPGVGTAGAAMASLKDKSLVGLIQGLTQPVLGVCLGMQMMTQVSKEHGGRDIDCECLGLIPTDVEELNSQGQPLPHMGWNQISPSMHPLFAGIPAGSYLYFVHSYRVPLSDYTIASCEYGETFSAAIAKDNFMGVQFHPEKSAAIGSKILSNFLALDKASLDAALQEPKS.

A Glutamine amidotransferase type-1 domain is found at 7–211; it reads STVIIDTGCA…LALDKASLDA (205 aa). The active-site Nucleophile is the cysteine 82. Active-site residues include histidine 186 and glutamate 188.

As to quaternary structure, heterodimer of HisH and HisF.

It is found in the cytoplasm. The enzyme catalyses 5-[(5-phospho-1-deoxy-D-ribulos-1-ylimino)methylamino]-1-(5-phospho-beta-D-ribosyl)imidazole-4-carboxamide + L-glutamine = D-erythro-1-(imidazol-4-yl)glycerol 3-phosphate + 5-amino-1-(5-phospho-beta-D-ribosyl)imidazole-4-carboxamide + L-glutamate + H(+). It catalyses the reaction L-glutamine + H2O = L-glutamate + NH4(+). It functions in the pathway amino-acid biosynthesis; L-histidine biosynthesis; L-histidine from 5-phospho-alpha-D-ribose 1-diphosphate: step 5/9. Its function is as follows. IGPS catalyzes the conversion of PRFAR and glutamine to IGP, AICAR and glutamate. The HisH subunit catalyzes the hydrolysis of glutamine to glutamate and ammonia as part of the synthesis of IGP and AICAR. The resulting ammonia molecule is channeled to the active site of HisF. The sequence is that of Imidazole glycerol phosphate synthase subunit HisH from Shewanella sediminis (strain HAW-EB3).